Here is a 344-residue protein sequence, read N- to C-terminus: Cyclin-dependent kinase 20 (344 aa).

Residues Tyr4–Phe288 form the Protein kinase domain. Residues Ile10–Val18 and Lys33 each bind ATP. Residue Asp127 is the Proton acceptor of the active site.

Belongs to the protein kinase superfamily. CMGC Ser/Thr protein kinase family. CDC2/CDKX subfamily. In terms of assembly, monomer. Interacts with tbc1d32.

Its subcellular location is the nucleus. The protein resides in the cytoplasm. It is found in the cell projection. The protein localises to the cilium. It carries out the reaction L-seryl-[protein] + ATP = O-phospho-L-seryl-[protein] + ADP + H(+). The enzyme catalyses L-threonyl-[protein] + ATP = O-phospho-L-threonyl-[protein] + ADP + H(+). Involved in cell growth. Activates cdk2, a kinase involved in the control of the cell cycle, by phosphorylating residue 'Thr-160'. Required for high-level Shh responses in the developing neural tube. Together with tbc1d32, controls the structure of the primary cilium by coordinating assembly of the ciliary membrane and axoneme, allowing gli2 to be properly activated in response to SHH signaling. The sequence is that of Cyclin-dependent kinase 20 (cdk20) from Danio rerio (Zebrafish).